A 482-amino-acid chain; its full sequence is GDP-D-glucose phosphorylase 1 (482 aa).

The segment at 1 to 21 (MEPFPRILDDRLPRNMRRPRP) is disordered. Histidine 255 functions as the Tele-GMP-histidine intermediate in the catalytic mechanism. The disordered stretch occupies residues 461–482 (MPRSPSIRHRSSTRAQSDEGSK).

Belongs to the GDPGP1 family. Expressed throughout the neuronal system, in the spermatheca and anterior hypodermal cells.

It localises to the cytoplasm. The catalysed reaction is GDP-alpha-D-glucose + phosphate = alpha-D-glucose 1-phosphate + GDP + H(+). In terms of biological role, specific and highly efficient GDP-D-glucose phosphorylase regulating the levels of GDP-D-glucose in cells. The polypeptide is GDP-D-glucose phosphorylase 1 (Caenorhabditis elegans).